The primary structure comprises 146 residues: Ribonuclease H (146 aa).

Positions 1 to 141 (MKHVDIFTDG…ADELARKGME (141 aa)) constitute an RNase H type-1 domain. Mg(2+) is bound by residues Asp9, Glu47, Asp69, and Asp133. Positions 123–146 (HAGHPENERADELARKGMEPFKRR) are disordered. Residues 125–146 (GHPENERADELARKGMEPFKRR) show a composition bias toward basic and acidic residues.

The protein belongs to the RNase H family. In terms of assembly, monomer. Requires Mg(2+) as cofactor.

The protein resides in the cytoplasm. The catalysed reaction is Endonucleolytic cleavage to 5'-phosphomonoester.. Functionally, endonuclease that specifically degrades the RNA of RNA-DNA hybrids. This Agrobacterium fabrum (strain C58 / ATCC 33970) (Agrobacterium tumefaciens (strain C58)) protein is Ribonuclease H.